The chain runs to 127 residues: Glycine cleavage system H protein (127 aa).

Residues Thr-24–Gln-106 form the Lipoyl-binding domain. Lys-65 carries the N6-lipoyllysine modification.

It belongs to the GcvH family. In terms of assembly, the glycine cleavage system is composed of four proteins: P, T, L and H. (R)-lipoate is required as a cofactor.

The glycine cleavage system catalyzes the degradation of glycine. The H protein shuttles the methylamine group of glycine from the P protein to the T protein. This is Glycine cleavage system H protein from Thermosynechococcus vestitus (strain NIES-2133 / IAM M-273 / BP-1).